Consider the following 246-residue polypeptide: Probable transcriptional regulatory protein CGSHiEE_01480 (246 aa).

It belongs to the TACO1 family.

The protein localises to the cytoplasm. The sequence is that of Probable transcriptional regulatory protein CGSHiEE_01480 from Haemophilus influenzae (strain PittEE).